Consider the following 838-residue polypeptide: V-type proton ATPase 116 kDa subunit a 1 (838 aa).

Topologically, residues 1-388 (MGELFRSEEM…DAYGIGTYRE (388 aa)) are cytoplasmic. Phosphothreonine is present on residues Thr-250 and Thr-360. Phosphotyrosine is present on Tyr-364. Residues 389 to 407 (INPAPYTIITFPFLFAVMF) traverse the membrane as a helical segment. Over 408–409 (GD) the chain is Vacuolar. The helical transmembrane segment at 410–426 (LGHGILMTLFAVWMVLK) threads the bilayer. Over 427 to 441 (ESRILSQKNENEMFS) the chain is Cytoplasmic. The helical transmembrane segment at 442–471 (TIFSGRYIILLMGVFSIYTGLIYNDCFSKS) threads the bilayer. The Vacuolar segment spans residues 472–535 (LNIFGSSWSV…ATNKLTFLNS (64 aa)). The chain crosses the membrane as a helical span at residues 536 to 555 (FKMKMSVILGIIHMLFGVSL). Residues 556 to 573 (SLFNHTYFKKPLNIYFGF) are Cytoplasmic-facing. Residues 574–594 (IPEIIFMTSLFGYLVILIFYK) form a helical membrane-spanning segment. Over 595 to 639 (WTAYNAKTSEKAPSLLIHFINMFLFSYGDSGNSMLYSGQKGIQCF) the chain is Vacuolar. Residues 640–659 (LVVVALLCVPWMLLFKPLVL) traverse the membrane as a helical segment. The Cytoplasmic segment spans residues 660 to 725 (RRQYLRRKHL…DTMVHQAIHT (66 aa)). The helical transmembrane segment at 726 to 750 (IEYCLGCISNTASYLRLWALSLAHA) threads the bilayer. At 751–771 (QLSEVLWTMVIHIGLKVKSLA) the chain is on the vacuolar side. A helical transmembrane segment spans residues 772–810 (GGLALFFIFAAFATLTVAILLIMEGLSAFLHALRLHWVE). Over 811–838 (FQNKFYSGTGFKFLPFSFEHIREGKFDD) the chain is Cytoplasmic.

It belongs to the V-ATPase 116 kDa subunit family. V-ATPase is a heteromultimeric enzyme made up of two complexes: the ATP-hydrolytic V1 complex and the proton translocation V0 complex. The V1 complex consists of three catalytic AB heterodimers that form a heterohexamer, three peripheral stalks each consisting of EG heterodimers, one central rotor including subunits D and F, and the regulatory subunits C and H. The proton translocation complex V0 consists of the proton transport subunit a, a ring of proteolipid subunits c9c'', rotary subunit d, subunits e and f, and the accessory subunits ATP6AP1/Ac45 and ATP6AP2/PRR. Interacts with SPAAR. As to expression, expressed in brain (at protein level). In terms of tissue distribution, expressed heart, kidney, liver, spleen, and to a lesser extent in brain.

Its subcellular location is the cytoplasmic vesicle. The protein resides in the clathrin-coated vesicle membrane. It localises to the secretory vesicle. It is found in the synaptic vesicle membrane. The protein localises to the melanosome. Its function is as follows. Subunit of the V0 complex of vacuolar(H+)-ATPase (V-ATPase), a multisubunit enzyme composed of a peripheral complex (V1) that hydrolyzes ATP and a membrane integral complex (V0) that translocates protons. V-ATPase is responsible for the acidification of various organelles, such as lysosomes, endosomes, the trans-Golgi network, and secretory granules, including synaptic vesicles. In certain cell types, can be exported to the plasma membrane, where it is involved in the acidification of the extracellular environment. Required for assembly and activity of the vacuolar ATPase. Through its action on compartment acidification, plays an essential role in neuronal development in terms of integrity and connectivity of neurons. The chain is V-type proton ATPase 116 kDa subunit a 1 (ATP6V0A1) from Bos taurus (Bovine).